We begin with the raw amino-acid sequence, 998 residues long: Poly [ADP-ribose] polymerase 1 (998 aa).

2 PARP-type zinc fingers span residues 1 to 78 (AKSG…ETGG) and 99 to 189 (FAAE…PAVK). Positions 8, 11, 40, 43, 111, 114, 145, and 148 each coordinate Zn(2+). A disordered region spans residues 185–211 (LPAVKNEGKRKADEVDGHSAATKKKIK). Residues 190–201 (NEGKRKADEVDG) show a composition bias toward basic and acidic residues. 2 consecutive short sequence motifs (nuclear localization signal) follow at residues 193–195 (KRK) and 207–212 (KKKIKK). In terms of domain architecture, PADR1 zinc-binding spans 211–345 (KKEKEKESKL…FKRHDRAFPP (135 aa)). A zinc ribbon region spans residues 276–318 (GALLPCEECSGQFVFKGDAYYCTGDLSAWTKCVAKTQTPNRKD). Zn(2+) contacts are provided by Cys-281, Cys-284, Cys-297, and Cys-307. Pro residues predominate over residues 348–361 (APTPISPPAAPEPK). Residues 348–370 (APTPISPPAAPEPKPTVEETFPE) form a disordered region. Residues 357–507 (APEPKPTVEE…GSNKSEKKMK (151 aa)) form an automodification domain region. Residues 369-460 (PEGKPLTNTK…SVQELLSQFG (92 aa)) enclose the BRCT domain. PolyADP-ribosyl glutamic acid occurs at positions 391, 397, 419, 428, 429, 445, 447, 454, 467, 471, 477, 495, 496, and 503. Residues 471-510 (EAVQPTEKQPSSGPVAGKSSGKVKEEKGSNKSEKKMKLTV) are disordered. Basic and acidic residues predominate over residues 492–506 (KVKEEKGSNKSEKKM). Positions 525–621 (SCHVLETGGK…PNFTKYPKKF (97 aa)) constitute a WGR domain. The region spanning 645–762 (KSKLAKPVQE…DIEVAYSLLR (118 aa)) is the PARP alpha-helical domain. One can recognise a PARP catalytic domain in the interval 771-997 (DPIDVKYEKI…LKFNYKGGMM (227 aa)). NAD(+)-binding positions include 845–847 (HGS), Gly-854, Arg-861, and Ser-887. The active-site For poly [ADP-ribose] polymerase activity is Glu-971.

Belongs to the ARTD/PARP family. In terms of assembly, homodimer; PARP-type zinc-fingers from separate parp1 molecules form a dimer module that specifically recognizes DNA strand breaks. Poly-ADP-ribosylated on serine, glutamate and aspartate residues by autocatalysis. Auto-ADP-ribosylation on serine takes place following interaction with HPF1. Auto poly-ADP-ribosylation on serine residues promotes its dissociation from chromatin.

The protein resides in the chromosome. It localises to the nucleus. It is found in the nucleolus. The protein localises to the cytoplasm. Its subcellular location is the cytosol. It catalyses the reaction NAD(+) + (ADP-D-ribosyl)n-acceptor = nicotinamide + (ADP-D-ribosyl)n+1-acceptor + H(+).. It carries out the reaction L-seryl-[protein] + NAD(+) = O-(ADP-D-ribosyl)-L-seryl-[protein] + nicotinamide + H(+). The catalysed reaction is L-aspartyl-[protein] + NAD(+) = 4-O-(ADP-D-ribosyl)-L-aspartyl-[protein] + nicotinamide. The enzyme catalyses L-glutamyl-[protein] + NAD(+) = 5-O-(ADP-D-ribosyl)-L-glutamyl-[protein] + nicotinamide. It catalyses the reaction L-tyrosyl-[protein] + NAD(+) = O-(ADP-D-ribosyl)-L-tyrosyl-[protein] + nicotinamide + H(+). It carries out the reaction L-histidyl-[protein] + NAD(+) = N(tele)-(ADP-D-ribosyl)-L-histidyl-[protein] + nicotinamide + H(+). Its activity is regulated as follows. ADP-ribosyltransferase activity is regulated via an allosteric activation mechanism. In absence of activation signal, parp1 is autoinhibited by the PARP alpha-helical domain (also named HD region), which prevents effective NAD(+)-binding. Activity is highly stimulated by signals, such as DNA strand breaks. Binding to damaged DNA unfolds the PARP alpha-helical domain, relieving autoinhibition. Poly-ADP-ribosyltransferase activity is tightly regulated and parp1 is removed from damaged chromatin following initial poly-ADP-ribosylation of chromatin to avoid prolonged residence (trapping) that has cytotoxic consequences. A number of factors or post-translational modifications (auto-poly-ADP-ribosylation) promote parp1 removal from chromatin. In terms of biological role, poly-ADP-ribosyltransferase that mediates poly-ADP-ribosylation of proteins and plays a key role in DNA repair. Mediates glutamate, aspartate, serine, histidine or tyrosine ADP-ribosylation of proteins: the ADP-D-ribosyl group of NAD(+) is transferred to the acceptor carboxyl group of target residues and further ADP-ribosyl groups are transferred to the 2'-position of the terminal adenosine moiety, building up a polymer with an average chain length of 20-30 units. Serine ADP-ribosylation of proteins constitutes the primary form of ADP-ribosylation of proteins in response to DNA damage. Specificity for the different amino acids is conferred by interacting factors, such as hpf1 and nmnat1. Following interaction with hpf1, catalyzes serine ADP-ribosylation of target proteins; hpf1 confers serine specificity by completing the parp1 active site. Also catalyzes tyrosine ADP-ribosylation of target proteins following interaction with hpf1. Following interaction with nmnat1, catalyzes glutamate and aspartate ADP-ribosylation of target proteins; nmnat1 confers glutamate and aspartate specificity. Parp1 initiates the repair of DNA breaks: recognizes and binds DNA breaks within chromatin and recruits hpf1, licensing serine ADP-ribosylation of target proteins, such as histones (H2BS6ADPr and H3S10ADPr), thereby promoting decompaction of chromatin and the recruitment of repair factors leading to the reparation of DNA strand breaks. In addition to base excision repair (BER) pathway, also involved in double-strand breaks (DSBs) repair. Mediates the poly-ADP-ribosylation of a number of proteins. In addition to proteins, also able to ADP-ribosylate DNA: catalyzes ADP-ribosylation of DNA strand break termini containing terminal phosphates and a 2'-OH group in single- and double-stranded DNA, respectively. Parp1-mediated DNA repair in neurons plays a role in sleep: senses DNA damage in neurons and promotes sleep, facilitating efficient DNA repair. In addition to DNA repair, also involved in other processes, such as transcription regulation, programmed cell death, membrane repair, adipogenesis and innate immunity. Acts as a repressor of transcription: binds to nucleosomes and modulates chromatin structure in a manner similar to histone H1, thereby altering RNA polymerase II. Acts both as a positive and negative regulator of transcription elongation, depending on the context. Poly-ADP-ribose chains generated by parp1 also play a role in poly-ADP-ribose-dependent cell death, a process named parthanatos. Also acts as a negative regulator of the cGAS-STING pathway by mediating poly-ADP-ribosylation and inactivation of cgas. Acts as a negative regulator of adipogenesis by catalyzing poly ADP-ribosylation of histone H2B on 'Glu-35' (H2BE35ADPr). The polypeptide is Poly [ADP-ribose] polymerase 1 (parp1) (Xenopus laevis (African clawed frog)).